We begin with the raw amino-acid sequence, 268 residues long: Type III pantothenate kinase (268 aa).

18–25 (DIGNTTTT) contacts ATP. Residues Tyr108 and 115–118 (GADR) contribute to the substrate site. Catalysis depends on Asp117, which acts as the Proton acceptor. Asp138 lines the K(+) pocket. ATP is bound at residue Thr141. A substrate-binding site is contributed by Thr193.

This sequence belongs to the type III pantothenate kinase family. As to quaternary structure, homodimer. The cofactor is NH4(+). It depends on K(+) as a cofactor.

The protein localises to the cytoplasm. It carries out the reaction (R)-pantothenate + ATP = (R)-4'-phosphopantothenate + ADP + H(+). It participates in cofactor biosynthesis; coenzyme A biosynthesis; CoA from (R)-pantothenate: step 1/5. Catalyzes the phosphorylation of pantothenate (Pan), the first step in CoA biosynthesis. This is Type III pantothenate kinase from Chlorobaculum parvum (strain DSM 263 / NCIMB 8327) (Chlorobium vibrioforme subsp. thiosulfatophilum).